Consider the following 392-residue polypeptide: Large ribosomal subunit protein uL3 (392 aa).

This sequence belongs to the universal ribosomal protein uL3 family.

It is found in the cytoplasm. Its function is as follows. The L3 protein is a component of the large subunit of cytoplasmic ribosomes. The polypeptide is Large ribosomal subunit protein uL3 (rpl3) (Aspergillus fumigatus (strain ATCC MYA-4609 / CBS 101355 / FGSC A1100 / Af293) (Neosartorya fumigata)).